Consider the following 147-residue polypeptide: Submaxillary gland androgen-regulated protein 3A (147 aa).

The signal sequence occupies residues 1-22 (MKPLNLVLGLCILVGCFLSCEC). A disordered region spans residues 27-128 (RRHDPRGPFP…ISITTPTARD (102 aa)). Positions 33-105 (GPFPPPPPPH…PTPSIPPTGP (73 aa)) are enriched in pro residues. 3 repeat units span residues 43–54 (GPGIGRPHPPPF), 55–66 (GPGIGRPPPPPF), and 67–78 (GPGIGRPPPPPP). A 3 X 12 AA tandem repeats of G-P-G-I-G-R-P-[HP]-P-P-P-[PF] region spans residues 43–78 (GPGIGRPHPPPFGPGIGRPPPPPFGPGIGRPPPPPP). The segment covering 108-127 (TVQATTMPAASISITTPTAR) has biased composition (polar residues).

It belongs to the PROL1/PROL3 family. As to expression, secreted into saliva by submaxillary gland.

It is found in the secreted. In terms of biological role, may play a role in protection or detoxification. This chain is Submaxillary gland androgen-regulated protein 3A (Smr3a), found in Mus musculus (Mouse).